Here is a 422-residue protein sequence, read N- to C-terminus: Elongation factor 1-alpha (422 aa).

Residues Lys-5–Ser-221 form the tr-type G domain. Residues Gly-14–Ser-21 are G1. GTP is bound at residue Gly-14 to Ser-21. Position 21 (Ser-21) interacts with Mg(2+). Residues Gly-70–Asp-74 are G2. Positions Asp-91–Gly-94 are G3. GTP is bound by residues Asp-91 to His-95 and Asn-146 to Asp-149. A G4 region spans residues Asn-146–Asp-149. The segment at Ser-185–Phe-187 is G5.

This sequence belongs to the TRAFAC class translation factor GTPase superfamily. Classic translation factor GTPase family. EF-Tu/EF-1A subfamily.

It localises to the cytoplasm. It carries out the reaction GTP + H2O = GDP + phosphate + H(+). Functionally, GTP hydrolase that promotes the GTP-dependent binding of aminoacyl-tRNA to the A-site of ribosomes during protein biosynthesis. This is Elongation factor 1-alpha from Methanosarcina mazei (strain ATCC BAA-159 / DSM 3647 / Goe1 / Go1 / JCM 11833 / OCM 88) (Methanosarcina frisia).